A 117-amino-acid chain; its full sequence is Nascent polypeptide-associated complex protein (117 aa).

The NAC-A/B domain occupies 9–77 (PKQLKQMQRA…ARERSLEAEM (69 aa)).

The protein belongs to the NAC-alpha family. As to quaternary structure, homodimer. Interacts with the ribosome. Binds ribosomal RNA.

Contacts the emerging nascent chain on the ribosome. The chain is Nascent polypeptide-associated complex protein from Methanothermobacter thermautotrophicus (strain ATCC 29096 / DSM 1053 / JCM 10044 / NBRC 100330 / Delta H) (Methanobacterium thermoautotrophicum).